Here is a 282-residue protein sequence, read N- to C-terminus: tRNA pseudouridine synthase A (282 aa).

D53 serves as the catalytic Nucleophile. Y119 contributes to the substrate binding site.

Belongs to the tRNA pseudouridine synthase TruA family. Homodimer.

The enzyme catalyses uridine(38/39/40) in tRNA = pseudouridine(38/39/40) in tRNA. Its function is as follows. Formation of pseudouridine at positions 38, 39 and 40 in the anticodon stem and loop of transfer RNAs. The protein is tRNA pseudouridine synthase A of Corynebacterium efficiens (strain DSM 44549 / YS-314 / AJ 12310 / JCM 11189 / NBRC 100395).